The sequence spans 262 residues: Expansin-A21 (262 aa).

The N-terminal stretch at 1–29 (MKLLEKMTYVECFMIIMATWFMFISYSHG) is a signal peptide. The region spanning 64-169 (EGACGYGDLN…RRVPCAKTGG (106 aa)) is the Expansin-like EG45 domain. The 80-residue stretch at 179–258 (NILTILPYNV…SWGFGQTFDG (80 aa)) folds into the Expansin-like CBD domain.

Belongs to the expansin family. Expansin A subfamily.

It is found in the secreted. It localises to the cell wall. The protein localises to the membrane. In terms of biological role, causes loosening and extension of plant cell walls by disrupting non-covalent bonding between cellulose microfibrils and matrix glucans. No enzymatic activity has been found. The protein is Expansin-A21 (EXPA21) of Arabidopsis thaliana (Mouse-ear cress).